A 576-amino-acid polypeptide reads, in one-letter code: Chaperonin CPN60-2, mitochondrial (576 aa).

The N-terminal 34 residues, 1 to 34, are a transit peptide targeting the mitochondrion; sequence MYRAAASLASKARQAGSSSAARQVGSRLAWSRNY.

It belongs to the chaperonin (HSP60) family.

It localises to the mitochondrion. Implicated in mitochondrial protein import and macromolecular assembly. May facilitate the correct folding of imported proteins. May also prevent misfolding and promote the refolding and proper assembly of unfolded polypeptides generated under stress conditions in the mitochondrial matrix. This Zea mays (Maize) protein is Chaperonin CPN60-2, mitochondrial (CPN60II).